A 352-amino-acid chain; its full sequence is MDYQVSSPTYDIDYYTSEPCQKINVKQIAARLLPPLYSLVFIFGFVGNILVVLILINCKRLKSMTDIYLLNLAISDLLFLLTVPFWAHYAAAQWDFGNTMCQLLTGLYFIGFFSGIFFIILLTIDRYLAIVHAVFALKARTVTFGVVTSVITWVVAVFASLPRIIFTRSQREGLHYACSSHFPYSQYQFWKNFQTLKIVILGLVLPLLVMVICYSGILKTLLRCRNEKKRHRAVRLIFTIMIVYFLFWAPYNIVLLLNTFQEFFGLNNCSSSNRLDQAMQVTETLGMTHCCINPIIYAFVGEKFRNYLLVFFQKHIAKRFCKCCSIFQQEAPERASSVYTRSTGEQEISVGL.

At 1–30 the chain is on the extracellular side; it reads MDYQVSSPTYDIDYYTSEPCQKINVKQIAA. Position 3 is a sulfotyrosine (Tyr3). 2 O-linked (GalNAc...) serine glycosylation sites follow: Ser6 and Ser7. Sulfotyrosine is present on residues Tyr10, Tyr14, and Tyr15. 2 disulfides stabilise this stretch: Cys20/Cys269 and Cys101/Cys178. The chain crosses the membrane as a helical span at residues 31 to 58; sequence RLLPPLYSLVFIFGFVGNILVVLILINC. Over 59 to 68 the chain is Cytoplasmic; the sequence is KRLKSMTDIY. A helical membrane pass occupies residues 69–89; the sequence is LLNLAISDLLFLLTVPFWAHY. At 90–102 the chain is on the extracellular side; the sequence is AAAQWDFGNTMCQ. The chain crosses the membrane as a helical span at residues 103–124; the sequence is LLTGLYFIGFFSGIFFIILLTI. Residues 125-141 are Cytoplasmic-facing; it reads DRYLAIVHAVFALKART. Residues 142 to 166 traverse the membrane as a helical segment; it reads VTFGVVTSVITWVVAVFASLPRIIF. At 167–198 the chain is on the extracellular side; that stretch reads TRSQREGLHYACSSHFPYSQYQFWKNFQTLKI. A helical membrane pass occupies residues 199–218; it reads VILGLVLPLLVMVICYSGIL. The Cytoplasmic segment spans residues 219 to 235; sequence KTLLRCRNEKKRHRAVR. A helical transmembrane segment spans residues 236–260; the sequence is LIFTIMIVYFLFWAPYNIVLLLNTF. The Extracellular portion of the chain corresponds to 261 to 277; the sequence is QEFFGLNNCSSSNRLDQ. A helical transmembrane segment spans residues 278-301; sequence AMQVTETLGMTHCCINPIIYAFVG. At 302–352 the chain is on the cytoplasmic side; sequence EKFRNYLLVFFQKHIAKRFCKCCSIFQQEAPERASSVYTRSTGEQEISVGL. Residues Cys321, Cys323, and Cys324 are each lipidated (S-palmitoyl cysteine). Phosphoserine; by BARK1 occurs at positions 336, 337, 342, and 349.

The protein belongs to the G-protein coupled receptor 1 family. As to quaternary structure, interacts with PRAF2. Efficient ligand binding to CCL3/MIP-1alpha and CCL4/MIP-1beta requires sulfation, O-glycosylation and sialic acid modifications. Glycosylation on Ser-6 is required for efficient binding of CCL4. Interacts with GRK2. Interacts with ARRB1 and ARRB2. Interacts with CNIH4. Interacts with S100A4; this interaction stimulates T-lymphocyte chemotaxis. In terms of processing, sulfated on at least 2 of the N-terminal tyrosines. Sulfation is required for efficient binding of the chemokines, CCL3 and CCL4. Post-translationally, palmitoylation in the C-terminal is important for cell surface expression. Phosphorylation on serine residues in the C-terminal is stimulated by binding CC chemokines especially by APO-RANTES. In terms of processing, O-glycosylated, but not N-glycosylated. Ser-6 appears to be the major site even if Ser-7 may be also O-glycosylated. Also sialylated glycans present which contribute to chemokine binding. Thr-16 and Ser-17 may also be glycosylated and, if so, with small moieties such as a T-antigen.

It is found in the cell membrane. Receptor for a number of inflammatory CC-chemokines including CCL3/MIP-1-alpha, CCL4/MIP-1-beta and RANTES and subsequently transduces a signal by increasing the intracellular calcium ion level. May play a role in the control of granulocytic lineage proliferation or differentiation. Participates in T-lymphocyte migration to the infection site by acting as a chemotactic receptor. The protein is C-C chemokine receptor type 5 (CCR5) of Chlorocebus pygerythrus (Vervet monkey).